We begin with the raw amino-acid sequence, 333 residues long: Glycerol-3-phosphate dehydrogenase [NAD(P)+] (333 aa).

S10, W11, and K105 together coordinate NADPH. The sn-glycerol 3-phosphate site is built by K105, G136, and T138. A140 contributes to the NADPH binding site. K191, D244, S254, R255, and N256 together coordinate sn-glycerol 3-phosphate. K191 (proton acceptor) is an active-site residue. R255 contacts NADPH. NADPH-binding residues include V279 and E281.

It belongs to the NAD-dependent glycerol-3-phosphate dehydrogenase family.

The protein resides in the cytoplasm. It catalyses the reaction sn-glycerol 3-phosphate + NAD(+) = dihydroxyacetone phosphate + NADH + H(+). The enzyme catalyses sn-glycerol 3-phosphate + NADP(+) = dihydroxyacetone phosphate + NADPH + H(+). Its pathway is membrane lipid metabolism; glycerophospholipid metabolism. Catalyzes the reduction of the glycolytic intermediate dihydroxyacetone phosphate (DHAP) to sn-glycerol 3-phosphate (G3P), the key precursor for phospholipid synthesis. This chain is Glycerol-3-phosphate dehydrogenase [NAD(P)+], found in Trichlorobacter lovleyi (strain ATCC BAA-1151 / DSM 17278 / SZ) (Geobacter lovleyi).